An 86-amino-acid chain; its full sequence is Small ribosomal subunit protein bS16 (86 aa).

The protein belongs to the bacterial ribosomal protein bS16 family.

The protein is Small ribosomal subunit protein bS16 of Mycoplasmoides gallisepticum (strain R(low / passage 15 / clone 2)) (Mycoplasma gallisepticum).